We begin with the raw amino-acid sequence, 211 residues long: Protein-L-isoaspartate O-methyltransferase (211 aa).

Residue Ser-60 is part of the active site.

The protein belongs to the methyltransferase superfamily. L-isoaspartyl/D-aspartyl protein methyltransferase family.

It is found in the cytoplasm. The catalysed reaction is [protein]-L-isoaspartate + S-adenosyl-L-methionine = [protein]-L-isoaspartate alpha-methyl ester + S-adenosyl-L-homocysteine. In terms of biological role, catalyzes the methyl esterification of L-isoaspartyl residues in peptides and proteins that result from spontaneous decomposition of normal L-aspartyl and L-asparaginyl residues. It plays a role in the repair and/or degradation of damaged proteins. The sequence is that of Protein-L-isoaspartate O-methyltransferase from Hahella chejuensis (strain KCTC 2396).